The following is a 215-amino-acid chain: MRRVLYFTNTRPDAYATMSDPIRLIVGLGNPGPDYETTRHNAGFWLADHLADDLRTAFALEKGFFGMLAKARHAGENVVLLKPITYMNRSGQSVGAVARFYKLAPEQVLVLHDELDLLPGQVKIKQGGGHAGHNGLKDIQAALGSPNFWRLRIGIGHPRSLGLAQQVADFVLHPPRREEQQQIDTVIDRCRAVVPAMLAGDFALATRELHGANGA.

Tyr-35 provides a ligand contact to tRNA. His-40 serves as the catalytic Proton acceptor. TRNA-binding residues include Tyr-86, Asn-88, and Asn-134.

It belongs to the PTH family. As to quaternary structure, monomer.

The protein resides in the cytoplasm. The catalysed reaction is an N-acyl-L-alpha-aminoacyl-tRNA + H2O = an N-acyl-L-amino acid + a tRNA + H(+). Hydrolyzes ribosome-free peptidyl-tRNAs (with 1 or more amino acids incorporated), which drop off the ribosome during protein synthesis, or as a result of ribosome stalling. Its function is as follows. Catalyzes the release of premature peptidyl moieties from peptidyl-tRNA molecules trapped in stalled 50S ribosomal subunits, and thus maintains levels of free tRNAs and 50S ribosomes. This chain is Peptidyl-tRNA hydrolase, found in Bordetella parapertussis (strain 12822 / ATCC BAA-587 / NCTC 13253).